The chain runs to 523 residues: uncharacterized protein (523 aa).

The transit peptide at 1 to 63 directs the protein to the chloroplast; the sequence is MACVSTCLIL…NRHGIAVVKA (63 aa). The next 3 membrane-spanning stretches (helical) occupy residues 180 to 200, 386 to 406, and 423 to 443; these read VSFG…IIAL, ALVI…NTLL, and IYPL…IRWF.

It localises to the plastid. The protein resides in the chloroplast membrane. This is an uncharacterized protein from Arabidopsis thaliana (Mouse-ear cress).